A 130-amino-acid chain; its full sequence is Small ribosomal subunit protein uS9 (130 aa).

This sequence belongs to the universal ribosomal protein uS9 family.

The chain is Small ribosomal subunit protein uS9 from Streptococcus agalactiae serotype Ia (strain ATCC 27591 / A909 / CDC SS700).